Here is a 337-residue protein sequence, read N- to C-terminus: Anthranilate phosphoribosyltransferase (337 aa).

Residues Gly-80, 83 to 84 (GD), Thr-88, 90 to 93 (NIST), 108 to 116 (KHGNRAVSS), and Ser-120 contribute to the 5-phospho-alpha-D-ribose 1-diphosphate site. Gly-80 is an anthranilate binding site. Mg(2+) is bound at residue Ser-92. Asn-111 contributes to the anthranilate binding site. Arg-166 serves as a coordination point for anthranilate. The Mg(2+) site is built by Asp-224 and Glu-225.

Belongs to the anthranilate phosphoribosyltransferase family. As to quaternary structure, homodimer. Mg(2+) is required as a cofactor.

The enzyme catalyses N-(5-phospho-beta-D-ribosyl)anthranilate + diphosphate = 5-phospho-alpha-D-ribose 1-diphosphate + anthranilate. It participates in amino-acid biosynthesis; L-tryptophan biosynthesis; L-tryptophan from chorismate: step 2/5. Catalyzes the transfer of the phosphoribosyl group of 5-phosphorylribose-1-pyrophosphate (PRPP) to anthranilate to yield N-(5'-phosphoribosyl)-anthranilate (PRA). This is Anthranilate phosphoribosyltransferase from Anaeromyxobacter dehalogenans (strain 2CP-1 / ATCC BAA-258).